We begin with the raw amino-acid sequence, 473 residues long: Glycosyl hydrolase family 109 protein 2 (473 aa).

The segment at residues 1–31 (MSIFSSRRQFLKSLGLAAGAAAAGNALPGKA) is a signal peptide (tat-type signal). Residues 77–78 (GR), Asp99, 148–151 (WSSH), 168–169 (EV), and Asn197 each bind NAD(+). Substrate-binding positions include Tyr226, Arg244, 256-259 (YPTH), and Tyr339. Tyr256 contacts NAD(+).

It belongs to the Gfo/Idh/MocA family. Glycosyl hydrolase 109 subfamily. It depends on NAD(+) as a cofactor. In terms of processing, predicted to be exported by the Tat system. The position of the signal peptide cleavage has not been experimentally proven.

Functionally, glycosidase. This Akkermansia muciniphila (strain ATCC BAA-835 / DSM 22959 / JCM 33894 / BCRC 81048 / CCUG 64013 / CIP 107961 / Muc) protein is Glycosyl hydrolase family 109 protein 2.